The primary structure comprises 80 residues: Delta-actitoxin-Amc2a (80 aa).

Positions 1–19 (MNKVLFLCLVVLCATSAFA) are cleaved as a signal peptide. The propeptide occupies 20–30 (AEEEYVERAPV). Disulfide bonds link Cys37-Cys73, Cys39-Cys65, and Cys55-Cys74. At Pro56 the chain carries Hydroxyproline.

It belongs to the sea anemone type 3 (BDS) potassium channel toxin family.

The protein resides in the secreted. It is found in the nematocyst. In terms of biological role, neurotoxon that induces paralysis when injected into crabs. The sequence is that of Delta-actitoxin-Amc2a from Antheopsis maculata (Sea anemone).